Here is a 233-residue protein sequence, read N- to C-terminus: Small ribosomal subunit protein uS2 (233 aa).

The protein belongs to the universal ribosomal protein uS2 family.

The polypeptide is Small ribosomal subunit protein uS2 (Bacillus anthracis).